The primary structure comprises 645 residues: Dictomallein-like protein (645 aa).

An N-terminal signal peptide occupies residues 1-13; sequence MKLSMVMVLLVLA. The segment at 19-55 is disordered; the sequence is CGGNDDNNSERTHESGDSNGDVTTPDNDASSNDEDDA. One can recognise a Peptidase M66 domain in the interval 177 to 448; it reads PALHPELDLT…QRWVRNRARM (272 aa). His333 is a binding site for Zn(2+). The active site involves Glu334. His337 and His343 together coordinate Zn(2+).

The protein belongs to the dictomallein family. It depends on Zn(2+) as a cofactor.

Its subcellular location is the secreted. The polypeptide is Dictomallein-like protein (dtmL) (Hahella chejuensis (strain KCTC 2396)).